Consider the following 76-residue polypeptide: UPF0346 protein LBUL_1194 (76 aa).

This sequence belongs to the UPF0346 family.

This Lactobacillus delbrueckii subsp. bulgaricus (strain ATCC BAA-365 / Lb-18) protein is UPF0346 protein LBUL_1194.